Reading from the N-terminus, the 347-residue chain is MAIPSFSMCHKPELLKEGKSEGQEEEGLSYEFQEMLDSLPKERGRRNRYLYLFQGFRCQAKEIQAITSFQKHFQSLPDDVVLATIPKSGTTWLKALTFTILTRHRFDPVSSSSSDHPLLTSNPHDLVPFFEYKLYANGNVPDLSGLASPRTFATHVPFGALKDSVENPSVKVVYLCRNPFDTFISMWHYINNITSESVSAVLLDEAFDLYCRGLLIGFGPFWEHMLGYWRESLKRPEKVLFLKYEDLKEDIETNLKKLASFLGLPFTEEEEQKGVVKAIADLCSFENLKKLEVNKSSKLIQNYENRFLFRKGEVSDLVNYLSPSQVERLSALVDDKLAGSGLTFRLS.

87-92 (KSGTTW) provides a ligand contact to 3'-phosphoadenylyl sulfate. Histidine 155 (proton acceptor) is an active-site residue. 3'-phosphoadenylyl sulfate-binding positions include arginine 177, serine 185, tyrosine 244, and 310 to 312 (RKG).

It belongs to the sulfotransferase 1 family.

It is found in the cytoplasm. Its function is as follows. Sulfotransferase that utilizes 3'-phospho-5'-adenylyl sulfate (PAPS) as sulfonate donor. Not active with 11-hydroxyjasmonate or 12-hydroxyjasmonate. The sequence is that of Cytosolic sulfotransferase 14 (SOT14) from Arabidopsis thaliana (Mouse-ear cress).